The sequence spans 602 residues: Pentatricopeptide repeat-containing protein At5g11310, mitochondrial (602 aa).

The N-terminal 35 residues, 1–35 (MNSLFTAFRRNLLLNPNPHRNFFLHRLLSSSRRSS), are a transit peptide targeting the mitochondrion. PPR repeat units lie at residues 134-165 (SPSLFDSVVNSLCKAREFEIAWSLVFDRVRSD), 172-202 (SADTFIVLIRRYARAGMVQQAIRAFEFARSY), 211-241 (ELRLLEVLLDALCKEGHVREASMYLERIGGT), 249-283 (SVRIFNILLNGWFRSRKLKQAEKLWEEMKAMNVKP), 284-318 (TVVTYGTLIEGYCRMRRVQIAMEVLEEMKMAEMEI), 319-353 (NFMVFNPIIDGLGEAGRLSEALGMMERFFVCESGP), 354-388 (TIVTYNSLVKNFCKAGDLPGASKILKMMMTRGVDP), 389-423 (TTTTYNHFFKYFSKHNKTEEGMNLYFKLIEAGHSP), 424-458 (DRLTYHLILKMLCEDGKLSLAMQVNKEMKNRGIDP), 459-493 (DLLTTTMLIHLLCRLEMLEEAFEEFDNAVRRGIIP), and 494-528 (QYITFKMIDNGLRSKGMSDMAKRLSSLMSSLPHSK).

This sequence belongs to the PPR family. P subfamily.

The protein localises to the mitochondrion. The protein is Pentatricopeptide repeat-containing protein At5g11310, mitochondrial of Arabidopsis thaliana (Mouse-ear cress).